The primary structure comprises 533 residues: CTP synthase (533 aa).

The segment at 1–270 is amidoligase domain; that stretch reads MVHLAKYIVV…GDYIVRRIEL (270 aa). Serine 16 contacts CTP. Serine 16 contacts UTP. 17–22 is an ATP binding site; that stretch reads SIGKGI. Tyrosine 57 serves as a coordination point for L-glutamine. Aspartate 74 lines the ATP pocket. Mg(2+)-binding residues include aspartate 74 and glutamate 144. CTP is bound by residues 151–153, 191–196, and lysine 227; these read DIE and KTKPTQ. Residues 191 to 196 and lysine 227 each bind UTP; that span reads KTKPTQ. Positions 303 to 533 constitute a Glutamine amidotransferase type-1 domain; it reads YVELEDSYIS…FLRAALERSR (231 aa). Glycine 355 lines the L-glutamine pocket. Cysteine 382 functions as the Nucleophile; for glutamine hydrolysis in the catalytic mechanism. Residues 383–386, glutamate 405, and arginine 462 contribute to the L-glutamine site; that span reads LGMQ. Catalysis depends on residues histidine 507 and glutamate 509.

This sequence belongs to the CTP synthase family. In terms of assembly, homotetramer.

The enzyme catalyses UTP + L-glutamine + ATP + H2O = CTP + L-glutamate + ADP + phosphate + 2 H(+). The catalysed reaction is L-glutamine + H2O = L-glutamate + NH4(+). It catalyses the reaction UTP + NH4(+) + ATP = CTP + ADP + phosphate + 2 H(+). It participates in pyrimidine metabolism; CTP biosynthesis via de novo pathway; CTP from UDP: step 2/2. With respect to regulation, allosterically activated by GTP, when glutamine is the substrate; GTP has no effect on the reaction when ammonia is the substrate. The allosteric effector GTP functions by stabilizing the protein conformation that binds the tetrahedral intermediate(s) formed during glutamine hydrolysis. Inhibited by the product CTP, via allosteric rather than competitive inhibition. Catalyzes the ATP-dependent amination of UTP to CTP with either L-glutamine or ammonia as the source of nitrogen. Regulates intracellular CTP levels through interactions with the four ribonucleotide triphosphates. The sequence is that of CTP synthase from Methanothermobacter thermautotrophicus (strain ATCC 29096 / DSM 1053 / JCM 10044 / NBRC 100330 / Delta H) (Methanobacterium thermoautotrophicum).